Consider the following 706-residue polypeptide: Protein kinase C theta type (706 aa).

Residues 1–107 (MSPFLRIGLS…KNNGKTEIWL (107 aa)) form the C2 domain. Phosphotyrosine; by LCK is present on tyrosine 90. The Phorbol-ester/DAG-type 1 zinc-finger motif lies at 159 to 209 (CHEFTATFFPQPTFCSVCHEFVWGLNKQGYQCRQCNAAIHKKCIDKVIAKC). Threonine 219 carries the post-translational modification Phosphothreonine; by autocatalysis. The Phorbol-ester/DAG-type 2 zinc finger occupies 231–281 (PHRFKVYNYKSPTFCEHCGTLLWGLARQGLKCDACGMNVHHRCQTKVANLC). Phosphoserine is present on serine 348. A Protein kinase domain is found at 380-634 (FILHKMLGKG…RGDIRQHPLF (255 aa)). Residues 386–394 (LGKGSFGKV) and lysine 409 contribute to the ATP site. Catalysis depends on aspartate 504, which acts as the Proton acceptor. Residue threonine 538 is modified to Phosphothreonine; by PDPK1. The region spanning 635 to 706 (REINWEELER…MNPGMERLIS (72 aa)) is the AGC-kinase C-terminal domain. Phosphoserine occurs at positions 676, 685, and 695.

Belongs to the protein kinase superfamily. AGC Ser/Thr protein kinase family. PKC subfamily. Part of a lipid raft complex composed at least of BCL10, CARD11, MALT1 and IKBKB. Interacts with GLRX3 (via N-terminus). Interacts with ECT2. Interacts with CCDC88A/GIV; the interaction leads to phosphorylation of CCDC88A and inhibition of its guanine nucleotide exchange factor activity. Interacts with PRKCH upstream open reading frame 2; the interaction leads to inhibition of kinase activity. Interacts with CD28. Requires Mg(2+) as cofactor. Autophosphorylation at Thr-219 is required for targeting to the TCR and cellular function of PRKCQ upon antigen receptor ligation. Following TCR stimulation, phosphorylated at Tyr-90 and Ser-685. Expressed in skeletal muscle, T-cells, megakaryoblastic cells and platelets.

It localises to the cytoplasm. Its subcellular location is the cell membrane. The enzyme catalyses L-seryl-[protein] + ATP = O-phospho-L-seryl-[protein] + ADP + H(+). The catalysed reaction is L-threonyl-[protein] + ATP = O-phospho-L-threonyl-[protein] + ADP + H(+). With respect to regulation, novel PKCs (PRKCD, PRKCE, PRKCH and PRKCQ) are calcium-insensitive, but activated by diacylglycerol (DAG) and phosphatidylserine. Three specific sites; Thr-538 (activation loop of the kinase domain), Ser-676 (turn motif) and Ser-695 (hydrophobic region), need to be phosphorylated for its full activation. Inhibited by PRKCH upstream open reading frame 2. In terms of biological role, calcium-independent, phospholipid- and diacylglycerol (DAG)-dependent serine/threonine-protein kinase that mediates non-redundant functions in T-cell receptor (TCR) signaling, including T-cells activation, proliferation, differentiation and survival, by mediating activation of multiple transcription factors such as NF-kappa-B, JUN, NFATC1 and NFATC2. In TCR-CD3/CD28-co-stimulated T-cells, is required for the activation of NF-kappa-B and JUN, which in turn are essential for IL2 production, and participates in the calcium-dependent NFATC1 and NFATC2 transactivation. Mediates the activation of the canonical NF-kappa-B pathway (NFKB1) by direct phosphorylation of CARD11 on several serine residues, inducing CARD11 association with lipid rafts and recruitment of the BCL10-MALT1 complex, which then activates IKK complex, resulting in nuclear translocation and activation of NFKB1. May also play an indirect role in activation of the non-canonical NF-kappa-B (NFKB2) pathway. In the signaling pathway leading to JUN activation, acts by phosphorylating the mediator STK39/SPAK and may not act through MAP kinases signaling. Plays a critical role in TCR/CD28-induced NFATC1 and NFATC2 transactivation by participating in the regulation of reduced inositol 1,4,5-trisphosphate generation and intracellular calcium mobilization. After costimulation of T-cells through CD28 can phosphorylate CBLB and is required for the ubiquitination and subsequent degradation of CBLB, which is a prerequisite for the activation of TCR. During T-cells differentiation, plays an important role in the development of T-helper 2 (Th2) cells following immune and inflammatory responses, and, in the development of inflammatory autoimmune diseases, is necessary for the activation of IL17-producing Th17 cells. May play a minor role in Th1 response. Upon TCR stimulation, mediates T-cell protective survival signal by phosphorylating BAD, thus protecting T-cells from BAD-induced apoptosis, and by up-regulating BCL-X(L)/BCL2L1 levels through NF-kappa-B and JUN pathways. In platelets, regulates signal transduction downstream of the ITGA2B, CD36/GP4, F2R/PAR1 and F2RL3/PAR4 receptors, playing a positive role in 'outside-in' signaling and granule secretion signal transduction. May relay signals from the activated ITGA2B receptor by regulating the uncoupling of WASP and WIPF1, thereby permitting the regulation of actin filament nucleation and branching activity of the Arp2/3 complex. May mediate inhibitory effects of free fatty acids on insulin signaling by phosphorylating IRS1, which in turn blocks IRS1 tyrosine phosphorylation and downstream activation of the PI3K/AKT pathway. Phosphorylates MSN (moesin) in the presence of phosphatidylglycerol or phosphatidylinositol. Phosphorylates PDPK1 at 'Ser-504' and 'Ser-532' and negatively regulates its ability to phosphorylate PKB/AKT1. Phosphorylates CCDC88A/GIV and inhibits its guanine nucleotide exchange factor activity. Phosphorylates and activates LRRK1, which phosphorylates RAB proteins involved in intracellular trafficking. The protein is Protein kinase C theta type (PRKCQ) of Homo sapiens (Human).